Reading from the N-terminus, the 830-residue chain is MGSMFRSEEVALVQLFLPTAAAYTCVSRLGELGLVEFRDLNASVSAFQRRFVVDVRRCEELEKTFTFLQEEVRRAGLVLPPPKGRLPAPPPRDLLRIQEETERLAQELRDVRGNQQALRAQLHQLQLHAAVLRQGHEPQLAAAHTDGASERTPLLQAPGGPHQDLRVNFVAGAVEPHKAPALERLLWRACRGFLIASFRELEQPLEHPVTGEPATWMTFLISYWGEQIGQKIRKITDCFHCHVFPFLQQEEARLGALQQLQQQSQELQEVLGETERFLSQVLGRVLQLLPPGQVQVHKMKAVYLALNQCSVSTTHKCLIAEAWCSVRDLPALQEALRDSSMEEGVSAVAHRIPCRDMPPTLIRTNRFTASFQGIVDAYGVGRYQEVNPAPYTIITFPFLFAVMFGDVGHGLLMFLFALAMVLAENRPAVKAAQNEIWQTFFRGRYLLLLMGLFSIYTGFIYNECFSRATSIFPSGWSVAAMANQSGWSDAFLAQHTMLTLDPNVTGVFLGPYPFGIDPIWSLAANHLSFLNSFKMKMSVILGVVHMAFGVVLGVFNHVHFGQRHRLLLETLPELTFLLGLFGYLVFLVIYKWLCVWAARAASAPSILIHFINMFLFSHSPSNRLLYPRQEVVQATLVVLALAMVPILLLGTPLHLLHRHRRRLRRRPADRQEENKAGLLDLPDASVNGWSSDEEKAGGLDDEEEAELVPSEVLMHQAIHTIEFCLGCVSNTASYLRLWALSLAHAQLSEVLWAMVMRIGLGLGREVGVAAVVLVPIFAAFAVMTVAILLVMEGLSAFLHALRLHWVEFQNKFYSGTGYKLSPFTFAATDD.

Residues 1–385 (MGSMFRSEEV…DAYGVGRYQE (385 aa)) are Cytoplasmic-facing. Residues 139–158 (QLAAAHTDGASERTPLLQAP) are disordered. Residues 386–404 (VNPAPYTIITFPFLFAVMF) form a helical membrane-spanning segment. Topologically, residues 405–406 (GD) are vacuolar. The chain crosses the membrane as a helical span at residues 407–423 (VGHGLLMFLFALAMVLA). Over 424–438 (ENRPAVKAAQNEIWQ) the chain is Cytoplasmic. The chain crosses the membrane as a helical span at residues 439 to 468 (TFFRGRYLLLLMGLFSIYTGFIYNECFSRA). Over 469–532 (TSIFPSGWSV…AANHLSFLNS (64 aa)) the chain is Vacuolar. Residues 533–552 (FKMKMSVILGVVHMAFGVVL) traverse the membrane as a helical segment. Residues 553 to 570 (GVFNHVHFGQRHRLLLET) are Cytoplasmic-facing. The chain crosses the membrane as a helical span at residues 571–591 (LPELTFLLGLFGYLVFLVIYK). Residues 592–635 (WLCVWAARAASAPSILIHFINMFLFSHSPSNRLLYPRQEVVQAT) are Vacuolar-facing. The chain crosses the membrane as a helical span at residues 636–655 (LVVLALAMVPILLLGTPLHL). Residues 656–720 (LHRHRRRLRR…EVLMHQAIHT (65 aa)) lie on the Cytoplasmic side of the membrane. Residues 681–701 (LPDASVNGWSSDEEKAGGLDD) form a disordered region. Residues 721–745 (IEFCLGCVSNTASYLRLWALSLAHA) traverse the membrane as a helical segment. Over 746–766 (QLSEVLWAMVMRIGLGLGREV) the chain is Vacuolar. A helical membrane pass occupies residues 767–807 (GVAAVVLVPIFAAFAVMTVAILLVMEGLSAFLHALRLHWVE). Topologically, residues 808–830 (FQNKFYSGTGYKLSPFTFAATDD) are cytoplasmic.

The protein belongs to the V-ATPase 116 kDa subunit family. As to quaternary structure, V-ATPase is a heteromultimeric enzyme made up of two complexes: the ATP-hydrolytic V1 complex and the proton translocation V0 complex. The V1 complex consists of three catalytic AB heterodimers that form a heterohexamer, three peripheral stalks each consisting of EG heterodimers, one central rotor including subunits D and F, and the regulatory subunits C and H. The proton translocation complex V0 consists of the proton transport subunit a, a ring of proteolipid subunits c9c'', rotary subunit d, subunits e and f, and the accessory subunits ATP6AP1/Ac45 and ATP6AP2/PRR. Isoform long is highly expressed in osteoclastomas. Isoform short is highly expressed in thymus.

It localises to the membrane. Its function is as follows. Subunit of the V0 complex of vacuolar(H+)-ATPase (V-ATPase), a multisubunit enzyme composed of a peripheral complex (V1) that hydrolyzes ATP and a membrane integral complex (V0) that translocates protons. V-ATPase is responsible for acidifying and maintaining the pH of intracellular compartments and in some cell types, is targeted to the plasma membrane, where it is responsible for acidifying the extracellular environment. Seems to be directly involved in T-cell activation. In Homo sapiens (Human), this protein is V-type proton ATPase 116 kDa subunit a 3 (TCIRG1).